Here is a 228-residue protein sequence, read N- to C-terminus: Uracil-DNA glycosylase (228 aa).

The active-site Proton acceptor is the aspartate 64.

This sequence belongs to the uracil-DNA glycosylase (UDG) superfamily. UNG family.

It localises to the cytoplasm. It catalyses the reaction Hydrolyzes single-stranded DNA or mismatched double-stranded DNA and polynucleotides, releasing free uracil.. Functionally, excises uracil residues from the DNA which can arise as a result of misincorporation of dUMP residues by DNA polymerase or due to deamination of cytosine. In Pectobacterium carotovorum subsp. carotovorum (strain PC1), this protein is Uracil-DNA glycosylase.